We begin with the raw amino-acid sequence, 323 residues long: Phosphopantothenate--cysteine ligase 2 (323 aa).

This sequence belongs to the PPC synthetase family. In terms of assembly, homodimer.

It carries out the reaction (R)-4'-phosphopantothenate + L-cysteine + CTP = N-[(R)-4-phosphopantothenoyl]-L-cysteine + CMP + diphosphate + H(+). Its pathway is cofactor biosynthesis; coenzyme A biosynthesis; CoA from (R)-pantothenate: step 2/5. Catalyzes the first step in the biosynthesis of coenzyme A from vitamin B5, where cysteine is conjugated to 4'-phosphopantothenate to form 4-phosphopantothenoylcysteine. The polypeptide is Phosphopantothenate--cysteine ligase 2 (Oryza sativa subsp. japonica (Rice)).